A 1513-amino-acid polypeptide reads, in one-letter code: MFHLLLENEEIQFSNSFAQFYLQVDEAKKIFDEIDDDEYDKIQDQRKNDDFIVDDDGYGYRDHGGEIWERDDHPEDGGKKKKKSSMYVFSFSPKFIAQPLFLQPNEQSITAFMKPKSTINRPGAVTNSSAQIKQKPKVSAEQSKDIMNNLFQELDSKDVDELQDVNNSAVVTELNKPIAFNQNDMLTSKYAVTLETRQEVEQKRVTEQIQAQAQIGQNQQSSNPFSKKRKFEEISTNQNANASDSKRVSNQTNDNLNKVETQVISMLKVANPQIKVTSKLARMDDSMKIDQTSAQKNQIEQTVNHSKLQRYNQNQMMSGIKLDNRTSKPIRNLEIWNQVLANTQEFPLPLNENGTLSFYWIDAHEENNGTDLYIFGKIYQPQMRQFVSCSMKVNGMQRELYALPKMRGKARGALTVEEEKQQVRAVMMELDDIRKKRFPQISKWRCKPVNRKYAFEMPIQHGEHQFLKIKYDSTMPPLPSTIQGNTFECIFGSTQSMLELFILKRKIRGPCWMTIKNPTKVTDFKKTWCRQGIVIDNPKNVEVTLEDLNKQELPPLTSLTFSFKTTRAQQNTNEIAMISCLINTNIAQEGPSQVERTQSFTLLRKLDGKPMPYDFDQKVKQRKENIIQKFENERQMIEAFIAKVFIVDPDLVVAHNLCGGMFDLLLARIQYLKVNHWSRIGRLKKTQIPNKKLDFGGSSYGGSQWIPRQVTCGRLLVDTFLSAKELVRETSYDLTYLAKVQLKKDRQDFDDELLPTLYITSERLFSLIDHTEKDAYLTIQLMNHLAIIPLTLQLTNIAGNLWFRSLQNARAERNEMLLLHEFKKKKFILPDKKAPFAKDFKRNMFADEFEELKSGKGPKKGGKRKKAAYAGGLVIEPKAGFYDNIILLLDFNSLYPSIIQEYNLCFTTVNRRPTKNFDGSEVKSQFKAAGTDANEGNEVEEADLPDKNVNVKDAVLPNVLRDLVQKRKAVKEKMKNEKDAVKLSQLEIRQKAIKLTANSMYGCLGFGSSRFHAQAIAALITKTGRDTLLRTKDIAENKLGFNVVYGDTDSIMINTGTNQLQQSLEMGKRPQGLKLIALYKCLEIEIDGVFKSLLLLKKKKYAALKYEGFGTPDAKVVQEVKGLDMVRRDWCPLSKNVGNFVLNQILSGKQREDVVLNLNEYLSDIGEKMKNNGITLDQFIITKQLTKAISEYSDIKGQPHVAVAQRLKNQGKSESDLVNNFIPYVIGAQPFDPSKTNPALAGKAYHPEEVVSSKGKILLDIEWYITMQVLPPITRLIEHIDGIDVEFVAQCLGVDPKKYKYHSSEKKTGETNNDDGTLIQNPILQTETERSLKGRTIAELTIKCPHCSESYHFPGIFQDGKNNTLSGLLCIKCTQPIPEAYIQNRVTLFLKQLLTLYYQGNKQCQEPACGAVSRQLLYNNKCINLACKLKNDTRYTEQKTNDTLRYLQGLFNVKKYIQENQKNGCVHKTVEEVPNFDAFARMQGKVDDIMIRSKYNKVDLSSIFNFMKLGKQQ.

The tract at residues 235 to 254 (STNQNANASDSKRVSNQTND) is disordered. Zn(2+) is bound by residues Cys1344, Cys1347, Cys1370, Cys1373, Cys1404, Cys1409, Cys1422, and Cys1427. Residues 1344 to 1373 (CPHCSESYHFPGIFQDGKNNTLSGLLCIKC) form a CysA-type zinc finger. Positions 1404–1427 (CQEPACGAVSRQLLYNNKCINLAC) match the CysB motif motif.

The protein belongs to the DNA polymerase type-B family.

The protein resides in the nucleus. It catalyses the reaction DNA(n) + a 2'-deoxyribonucleoside 5'-triphosphate = DNA(n+1) + diphosphate. In terms of biological role, polymerase alpha in a complex with DNA primase is a replicative polymerase. The polypeptide is DNA polymerase alpha catalytic subunit (Oxytricha trifallax (Sterkiella histriomuscorum)).